Consider the following 244-residue polypeptide: MFSLKMRASSNGNHVSGAERLVKEEQIEEISSELIKRAMNHENGVPDFINLKVEKVTENINYIEHLKIKTINSNSKETSREFAINILKKELENYFLKNGKDTKKIDELIDSAFKIIDAGNMRGAAILDLDGNRLEKSSDRGIRVRNIDTAEELSKKILKDGSLTERTVDAIAIATKVVNCDIIAELCTSDNFSYTTGYVATKDGYFRILNLKDSGQVGGRVFFAESSDIDELYDKLENMPVIVY.

The protein belongs to the BioW family. As to quaternary structure, homodimer. The cofactor is Mg(2+).

The enzyme catalyses heptanedioate + ATP + CoA = 6-carboxyhexanoyl-CoA + AMP + diphosphate. The protein operates within metabolic intermediate metabolism; pimeloyl-CoA biosynthesis; pimeloyl-CoA from pimelate: step 1/1. In terms of biological role, catalyzes the transformation of pimelate into pimeloyl-CoA with concomitant hydrolysis of ATP to AMP. This Methanococcus maripaludis (strain DSM 14266 / JCM 13030 / NBRC 101832 / S2 / LL) protein is 6-carboxyhexanoate--CoA ligase.